We begin with the raw amino-acid sequence, 154 residues long: Ribonuclease H (154 aa).

The RNase H type-1 domain occupies 1–142 (MTPKLVIYTD…ADELARLGML (142 aa)). 4 residues coordinate Mg(2+): Asp10, Glu48, Asp70, and Asp134.

It belongs to the RNase H family. In terms of assembly, monomer. The cofactor is Mg(2+).

The protein localises to the cytoplasm. The enzyme catalyses Endonucleolytic cleavage to 5'-phosphomonoester.. Its function is as follows. Endonuclease that specifically degrades the RNA of RNA-DNA hybrids. This chain is Ribonuclease H, found in Caulobacter sp. (strain K31).